A 112-amino-acid polypeptide reads, in one-letter code: 2Fe-2S ferredoxin (112 aa).

The 103-residue stretch at 5 to 107 (IKVTFIINDG…GIKVHLPAAT (103 aa)) folds into the 2Fe-2S ferredoxin-type domain. Residues cysteine 42, cysteine 48, cysteine 51, and cysteine 88 each coordinate [2Fe-2S] cluster.

It belongs to the adrenodoxin/putidaredoxin family. [2Fe-2S] cluster is required as a cofactor.

Ferredoxin are iron-sulfur proteins that transfer electrons in a wide variety of metabolic reactions. In Rickettsia rickettsii, this protein is 2Fe-2S ferredoxin (fdxB).